A 282-amino-acid polypeptide reads, in one-letter code: Succinate dehydrogenase [ubiquinone] iron-sulfur subunit, mitochondrial (282 aa).

The transit peptide at methionine 1–glutamate 30 directs the protein to the mitochondrion. N6-acetyllysine is present on residues lysine 53 and lysine 57. The 2Fe-2S ferredoxin-type domain maps to aspartate 56–methionine 135. The [2Fe-2S] cluster site is built by cysteine 95, cysteine 100, cysteine 103, and cysteine 115. The interaction with SDHAF1 stretch occupies residues phenylalanine 148–tryptophan 220. The 31-residue stretch at aspartate 178–tyrosine 208 folds into the 4Fe-4S ferredoxin-type domain. [4Fe-4S] cluster contacts are provided by cysteine 188, cysteine 191, and cysteine 194. Cysteine 198 provides a ligand contact to [3Fe-4S] cluster. Residue tryptophan 203 coordinates a ubiquinone. [3Fe-4S] cluster contacts are provided by cysteine 245 and cysteine 251. Cysteine 255 is a [4Fe-4S] cluster binding site.

Belongs to the succinate dehydrogenase/fumarate reductase iron-sulfur protein family. As to quaternary structure, component of complex II composed of four subunits: the flavoprotein (FP) SDHA, iron-sulfur protein (IP) SDHB, and a cytochrome b560 composed of SDHC and SDHD. Interacts with SDHAF1; the interaction is required for iron-sulfur cluster incorporation into SDHB. Requires [2Fe-2S] cluster as cofactor. [3Fe-4S] cluster is required as a cofactor. [4Fe-4S] cluster serves as cofactor.

The protein resides in the mitochondrion inner membrane. It carries out the reaction a quinone + succinate = fumarate + a quinol. The enzyme catalyses (R)-malate + a quinone = enol-oxaloacetate + a quinol. It catalyses the reaction (S)-malate + a quinone = enol-oxaloacetate + a quinol. It participates in carbohydrate metabolism; tricarboxylic acid cycle; fumarate from succinate (eukaryal route): step 1/1. With respect to regulation, enol-oxaloacetate inhibits the succinate dehydrogenase activity. Iron-sulfur protein (IP) subunit of the succinate dehydrogenase complex (mitochondrial respiratory chain complex II), responsible for transferring electrons from succinate to ubiquinone (coenzyme Q). SDH also oxidizes malate to the non-canonical enol form of oxaloacetate, enol-oxaloacetate. Enol-oxaloacetate, which is a potent inhibitor of the succinate dehydrogenase activity, is further isomerized into keto-oxaloacetate. This Rattus norvegicus (Rat) protein is Succinate dehydrogenase [ubiquinone] iron-sulfur subunit, mitochondrial (Sdhb).